Reading from the N-terminus, the 132-residue chain is D-ribose pyranase (132 aa).

His-20 acts as the Proton donor in catalysis. Substrate-binding positions include Asp-28, His-99, and Tyr-121–Asn-123.

Belongs to the RbsD / FucU family. RbsD subfamily. Homodecamer.

The protein resides in the cytoplasm. The enzyme catalyses beta-D-ribopyranose = beta-D-ribofuranose. It participates in carbohydrate metabolism; D-ribose degradation; D-ribose 5-phosphate from beta-D-ribopyranose: step 1/2. Catalyzes the interconversion of beta-pyran and beta-furan forms of D-ribose. In Streptococcus agalactiae serotype Ia (strain ATCC 27591 / A909 / CDC SS700), this protein is D-ribose pyranase.